Consider the following 376-residue polypeptide: 1-acyl-sn-glycerol-3-phosphate acyltransferase gamma (376 aa).

Topologically, residues 1-124 (MGLLAFLKTQ…LGSSKVLAKK (124 aa)) are cytoplasmic. The short motif at 96–101 (HNFEID) is the HXXXXD motif element. The chain crosses the membrane as a helical span at residues 125-145 (ELLYVPLIGWTWYFLEIVFCK). Residues 146–316 (RKWEEDRDTV…TLLNFLSWAT (171 aa)) lie on the Lumenal side of the membrane. Residues 317-339 (ILLSPLFSFVLGVFASGSPLLIL) traverse the membrane as a helical segment. Residues 340–376 (TFLGFVGAASFGVRRLIGVTEIEKGSSYGNQEFKKKE) are Cytoplasmic-facing.

The protein belongs to the 1-acyl-sn-glycerol-3-phosphate acyltransferase family. Widely expressed with highest levels in testis, pancreas and kidney, followed by spleen, lung, adipose tissue and liver.

Its subcellular location is the endoplasmic reticulum membrane. It localises to the nucleus envelope. It catalyses the reaction a 1-acyl-sn-glycero-3-phosphate + an acyl-CoA = a 1,2-diacyl-sn-glycero-3-phosphate + CoA. The catalysed reaction is pentadecanoyl-CoA + 1-(9Z-octadecenoyl)-sn-glycero-3-phosphate = 1-(9Z)-octadecenoyl-2-pentadecanoyl-sn-glycero-3-phosphate + CoA. The enzyme catalyses heptadecanoyl-CoA + 1-(9Z-octadecenoyl)-sn-glycero-3-phosphate = 1-(9Z)-octadecenoyl-2-heptadecanoyl-sn-glycero-3-phosphate + CoA. It carries out the reaction 1-(9Z-octadecenoyl)-sn-glycero-3-phosphate + octadecanoyl-CoA = 1-(9Z-octadecenoyl)-2-octadecanoyl-sn-glycero-3-phosphate + CoA. It catalyses the reaction nonadecanoyl-CoA + 1-(9Z-octadecenoyl)-sn-glycero-3-phosphate = 1-(9Z)-octadecenoyl-2-nonadecanoyl-sn-glycero-3-phosphate + CoA. The catalysed reaction is 1-(9Z-octadecenoyl)-sn-glycero-3-phosphate + (5Z,8Z,11Z,14Z)-eicosatetraenoyl-CoA = 1-(9Z)-octadecenoyl-2-(5Z,8Z,11Z,14Z)-eicosatetraenoyl-sn-glycero-3-phosphate + CoA. The enzyme catalyses 1-(9Z-octadecenoyl)-sn-glycero-3-phosphate + (9Z)-octadecenoyl-CoA = 1,2-di-(9Z-octadecenoyl)-sn-glycero-3-phosphate + CoA. It carries out the reaction 1-(9Z-octadecenoyl)-sn-glycero-3-phosphate + (9Z,12Z)-octadecadienoyl-CoA = 1-(9Z)-octadecenoyl-2-(9Z,12Z)-octadecadienoyl-sn-glycero-3-phosphate + CoA. It catalyses the reaction 1-(9Z-octadecenoyl)-sn-glycero-3-phosphocholine + (5Z,8Z,11Z,14Z)-eicosatetraenoyl-CoA = 1-(9Z)-octadecenoyl-2-(5Z,8Z,11Z,14Z)-icosatetraenoyl-sn-glycero-3-phosphocholine + CoA. The catalysed reaction is 1-(9Z-octadecenoyl)-sn-glycero-3-phospho-(1D-myo-inositol) + (5Z,8Z,11Z,14Z)-eicosatetraenoyl-CoA = 1-(9Z-octadecenoyl)-2-(5Z,8Z,11Z,14Z-eicosatetraenoyl)-sn-glycero-3-phospho-1D-myo-inositol + CoA. The enzyme catalyses 1-(9Z-octadecenoyl)-sn-glycero-3-phospho-L-serine + (5Z,8Z,11Z,14Z)-eicosatetraenoyl-CoA = 1-(9Z-octadecenoyl)-2-(5Z,8Z,11Z,14Z-eicosatetraenoyl)-sn-glycero-3-phospho-L-serine + CoA. It carries out the reaction 1-hexadecanoyl-sn-glycero-3-phosphate + (9Z)-octadecenoyl-CoA = 1-hexadecanoyl-2-(9Z-octadecenoyl)-sn-glycero-3-phosphate + CoA. It catalyses the reaction 1-hexadecanoyl-sn-glycero-3-phosphate + (5Z,8Z,11Z,14Z)-eicosatetraenoyl-CoA = 1-hexadecanoyl-2-(5Z,8Z,11Z,14Z-eicosatetraenoyl)-sn-glycero-3-phosphate + CoA. The catalysed reaction is 1-heptadecanoyl-sn-glycero-3-phosphate + (5Z,8Z,11Z,14Z)-eicosatetraenoyl-CoA = 1-heptadecanoyl-2-(5Z,8Z,11Z,14Z)-eicosatetraenoyl-sn-glycero-3-phosphate + CoA. The enzyme catalyses 1-octadecanoyl-sn-glycero-3-phosphate + (9Z)-octadecenoyl-CoA = 1-octadecanoyl-2-(9Z-octadecenoyl)-sn-glycero-3-phosphate + CoA. It carries out the reaction 1-octadecanoyl-sn-glycero-3-phosphate + (5Z,8Z,11Z,14Z)-eicosatetraenoyl-CoA = 1-octadecanoyl-2-(5Z,8Z,11Z,14Z-eicosatetraenoyl)-sn-glycero-3-phosphate + CoA. It catalyses the reaction 1-(9Z-octadecenoyl)-sn-glycero-3-phosphate + hexadecanoyl-CoA = 1-hexadecanoyl-2-(9Z-octadecenoyl)-sn-glycero-3-phosphate + CoA. The catalysed reaction is 1-O-(9Z-octadecenyl)-sn-glycero-3-phosphate + (5Z,8Z,11Z,14Z)-eicosatetraenoyl-CoA = 1-O-(9Z-octadecenyl)-2-(5Z,8Z,11Z,14Z-eicosatetraenoyl)-sn-glycero-3-phosphate + CoA. The enzyme catalyses a 1-acyl-sn-glycero-3-phospho-(1D-myo-inositol) + (5Z,8Z,11Z,14Z)-eicosatetraenoyl-CoA = a 1-acyl-2-(5Z,8Z,11Z,14Z-eicosatetraenoyl)-sn-glycero-3-phospho-(1D-myo-inositol) + CoA. It participates in phospholipid metabolism; CDP-diacylglycerol biosynthesis; CDP-diacylglycerol from sn-glycerol 3-phosphate: step 2/3. Functionally, converts 1-acyl-sn-glycerol-3-phosphate (lysophosphatidic acid or LPA) into 1,2-diacyl-sn-glycerol-3-phosphate (phosphatidic acid or PA) by incorporating an acyl moiety at the sn-2 position of the glycerol backbone. Acts on LPA containing saturated or unsaturated fatty acids C16:0-C20:4 at the sn-1 position using C18:1, C20:4 or C18:2-CoA as the acyl donor. Also acts on lysophosphatidylcholine, lysophosphatidylinositol and lysophosphatidylserine using C18:1 or C20:4-CoA. Has a preference for arachidonoyl-CoA as a donor. Also has a modest lysophosphatidylinositol acyltransferase (LPIAT) activity, converts lysophosphatidylinositol (LPI) into phosphatidylinositol. The polypeptide is 1-acyl-sn-glycerol-3-phosphate acyltransferase gamma (AGPAT3) (Homo sapiens (Human)).